We begin with the raw amino-acid sequence, 61 residues long: Small ribosomal subunit protein uS14 (61 aa).

4 residues coordinate Zn(2+): cysteine 24, cysteine 27, cysteine 40, and cysteine 43.

The protein belongs to the universal ribosomal protein uS14 family. Zinc-binding uS14 subfamily. Part of the 30S ribosomal subunit. Contacts proteins S3 and S10. Zn(2+) is required as a cofactor.

In terms of biological role, binds 16S rRNA, required for the assembly of 30S particles and may also be responsible for determining the conformation of the 16S rRNA at the A site. The protein is Small ribosomal subunit protein uS14 of Caldanaerobacter subterraneus subsp. tengcongensis (strain DSM 15242 / JCM 11007 / NBRC 100824 / MB4) (Thermoanaerobacter tengcongensis).